Here is a 217-residue protein sequence, read N- to C-terminus: 3,4-dihydroxy-2-butanone 4-phosphate synthase (217 aa).

D-ribulose 5-phosphate contacts are provided by residues 37-38 (RE), D42, 150-154 (RGGHT), and E174. E38 contributes to the Mg(2+) binding site. H153 serves as a coordination point for Mg(2+).

It belongs to the DHBP synthase family. In terms of assembly, homodimer. Requires Mg(2+) as cofactor. The cofactor is Mn(2+).

The enzyme catalyses D-ribulose 5-phosphate = (2S)-2-hydroxy-3-oxobutyl phosphate + formate + H(+). The protein operates within cofactor biosynthesis; riboflavin biosynthesis; 2-hydroxy-3-oxobutyl phosphate from D-ribulose 5-phosphate: step 1/1. Its function is as follows. Catalyzes the conversion of D-ribulose 5-phosphate to formate and 3,4-dihydroxy-2-butanone 4-phosphate. The protein is 3,4-dihydroxy-2-butanone 4-phosphate synthase of Cronobacter sakazakii (strain ATCC BAA-894) (Enterobacter sakazakii).